The sequence spans 251 residues: Pyrroloquinoline-quinone synthase (251 aa).

This sequence belongs to the PqqC family.

It carries out the reaction 6-(2-amino-2-carboxyethyl)-7,8-dioxo-1,2,3,4,7,8-hexahydroquinoline-2,4-dicarboxylate + 3 O2 = pyrroloquinoline quinone + 2 H2O2 + 2 H2O + H(+). It functions in the pathway cofactor biosynthesis; pyrroloquinoline quinone biosynthesis. Ring cyclization and eight-electron oxidation of 3a-(2-amino-2-carboxyethyl)-4,5-dioxo-4,5,6,7,8,9-hexahydroquinoline-7,9-dicarboxylic-acid to PQQ. In Klebsiella pneumoniae subsp. pneumoniae (strain ATCC 700721 / MGH 78578), this protein is Pyrroloquinoline-quinone synthase.